Here is a 196-residue protein sequence, read N- to C-terminus: CRISPR-associated exonuclease Cas4 (196 aa).

Cysteine 23 provides a ligand contact to [4Fe-4S] cluster. Mn(2+) contacts are provided by histidine 50, aspartate 90, and glutamate 103. Positions 184, 187, and 193 each coordinate [4Fe-4S] cluster.

It belongs to the CRISPR-associated exonuclease Cas4 family. Requires Mg(2+) as cofactor. It depends on [4Fe-4S] cluster as a cofactor.

The catalysed reaction is exonucleolytic cleavage in the 5'- to 3'-direction to yield nucleoside 3'-phosphates.. Functionally, CRISPR (clustered regularly interspaced short palindromic repeat) is an adaptive immune system that provides protection against mobile genetic elements (viruses, transposable elements and conjugative plasmids). CRISPR clusters contain sequences complementary to antecedent mobile elements and target invading nucleic acids. CRISPR clusters are transcribed and processed into CRISPR RNA (crRNA). This may be a 5' to 3' ssDNA exonuclease. The sequence is that of CRISPR-associated exonuclease Cas4 from Francisella tularensis subsp. novicida (strain U112).